A 317-amino-acid polypeptide reads, in one-letter code: L-lactate dehydrogenase (317 aa).

Residues Val17, Asp38, Lys43, Tyr69, and 83 to 84 each bind NAD(+); that span reads GA. Substrate contacts are provided by Gln86 and Arg92. Residues Ser105, 122–124, and Ser147 each bind NAD(+); that span reads ATN. 124–127 serves as a coordination point for substrate; sequence NPVD. Substrate is bound at residue 152 to 155; the sequence is DTAR. Positions 157 and 172 each coordinate beta-D-fructose 1,6-bisphosphate. The active-site Proton acceptor is the His179. Tyr224 is modified (phosphotyrosine). Thr233 is a binding site for substrate.

The protein belongs to the LDH/MDH superfamily. LDH family. Homotetramer.

Its subcellular location is the cytoplasm. The enzyme catalyses (S)-lactate + NAD(+) = pyruvate + NADH + H(+). Its pathway is fermentation; pyruvate fermentation to lactate; (S)-lactate from pyruvate: step 1/1. Allosterically activated by fructose 1,6-bisphosphate (FBP). Catalyzes the conversion of lactate to pyruvate. The chain is L-lactate dehydrogenase from Geobacillus thermodenitrificans (strain NG80-2).